A 490-amino-acid chain; its full sequence is Betaine aldehyde dehydrogenase (490 aa).

A K(+)-binding site is contributed by N93. Residue 150 to 152 (GAW) coordinates NAD(+). The active-site Charge relay system is the K162. NAD(+) is bound at residue 176-179 (KPSE). V180 lines the K(+) pocket. 230–233 (GTAT) contacts NAD(+). L246 provides a ligand contact to K(+). E252 acts as the Proton acceptor in catalysis. G254, C286, and E387 together coordinate NAD(+). Residue C286 is the Nucleophile of the active site. C286 bears the Cysteine sulfenic acid (-SOH) mark. 2 residues coordinate K(+): K457 and G460. Residue E464 is the Charge relay system of the active site.

It belongs to the aldehyde dehydrogenase family. As to quaternary structure, dimer of dimers. It depends on K(+) as a cofactor.

The enzyme catalyses betaine aldehyde + NAD(+) + H2O = glycine betaine + NADH + 2 H(+). Its pathway is amine and polyamine biosynthesis; betaine biosynthesis via choline pathway; betaine from betaine aldehyde: step 1/1. Functionally, involved in the biosynthesis of the osmoprotectant glycine betaine. Catalyzes the irreversible oxidation of betaine aldehyde to the corresponding acid. In Xanthomonas euvesicatoria pv. vesicatoria (strain 85-10) (Xanthomonas campestris pv. vesicatoria), this protein is Betaine aldehyde dehydrogenase.